The chain runs to 342 residues: Prenyl transferase ptmC (342 aa).

A helical transmembrane segment spans residues 17–37 (LSFLTLTVGALALIVVLYISI). His-110 provides a ligand contact to isopentenyl diphosphate. Mg(2+) contacts are provided by Asp-117 and Asp-121. A dimethylallyl diphosphate-binding site is contributed by Arg-126. Asn-154 is a glycosylation site (N-linked (GlcNAc...) asparagine). Lys-210, Thr-211, Gln-240, Asn-247, and Lys-257 together coordinate dimethylallyl diphosphate.

Belongs to the FPP/GGPP synthase family.

The protein resides in the membrane. It functions in the pathway secondary metabolite biosynthesis. In terms of biological role, prenyl transferase; part of the gene cluster that mediates the biosynthesis of the indole diterpenes penitrems. The geranylgeranyl diphosphate (GGPP) synthase ptmG catalyzes the first step in penitrem biosynthesis via conversion of farnesyl pyrophosphate and isopentyl pyrophosphate into geranylgeranyl pyrophosphate (GGPP). Condensation of indole-3-glycerol phosphate with GGPP by the prenyl transferase ptmC then forms 3-geranylgeranylindole (3-GGI). Epoxidation by the FAD-dependent monooxygenase ptmM leads to a epoxidized-GGI that is substrate of the terpene cyclase ptmB for cyclization to yield paspaline. Paspaline is subsequently converted to 13-desoxypaxilline by the cytochrome P450 monooxygenase ptmP, the latter being then converted to paxilline by the cytochrome P450 monooxygenase ptmQ. Paxilline is converted to beta-paxitriol via C-10 ketoreduction by the short-chain dehydrogenase ptmH which can be monoprenylated at the C-20 by the indole diterpene prenyltransferase ptmD. A two-step elimination (acetylation and elimination) process performed by the O-acetyltransferase ptmV and ptmI leads to the production of the prenylated form of penijanthine. The FAD-linked oxidoreductase ptmO then converts the prenylated form of penijanthine into PC-M5 which is in turn transformed into PC-M4 by the aromatic dimethylallyltransferase ptmE. Five sequential oxidative transformations performed by the cytochrome P450 monooxygenases ptmK, ptmU, ptmL, ptmN and ptmJ yield the various penitrem compounds. PtmK, ptmU and ptmM are involved in the formation of the key bicyclic ring of penitrem C via the formation of the intermediates secopenitrem D and penitrem D. PtmL catalyzes the epoxidation of penitrem D and C to yield penitrem B and F, respectively. PtmJ catalyzes the last benzylic hydroxylation to convert penitrem B to prenitrem E and penitrem F to penitrem A. The polypeptide is Prenyl transferase ptmC (Penicillium ochrochloron).